Consider the following 243-residue polypeptide: Pyridoxine 5'-phosphate synthase (243 aa).

A 3-amino-2-oxopropyl phosphate-binding site is contributed by Asn-9. Asp-11–His-12 serves as a coordination point for 1-deoxy-D-xylulose 5-phosphate. Arg-20 provides a ligand contact to 3-amino-2-oxopropyl phosphate. Residue His-45 is the Proton acceptor of the active site. 1-deoxy-D-xylulose 5-phosphate-binding residues include Arg-47 and His-52. The active-site Proton acceptor is Glu-72. 1-deoxy-D-xylulose 5-phosphate is bound at residue Thr-102. Residue His-193 is the Proton donor of the active site. 3-amino-2-oxopropyl phosphate contacts are provided by residues Gly-194 and Gly-215 to His-216.

The protein belongs to the PNP synthase family. Homooctamer; tetramer of dimers.

It is found in the cytoplasm. It carries out the reaction 3-amino-2-oxopropyl phosphate + 1-deoxy-D-xylulose 5-phosphate = pyridoxine 5'-phosphate + phosphate + 2 H2O + H(+). It functions in the pathway cofactor biosynthesis; pyridoxine 5'-phosphate biosynthesis; pyridoxine 5'-phosphate from D-erythrose 4-phosphate: step 5/5. Functionally, catalyzes the complicated ring closure reaction between the two acyclic compounds 1-deoxy-D-xylulose-5-phosphate (DXP) and 3-amino-2-oxopropyl phosphate (1-amino-acetone-3-phosphate or AAP) to form pyridoxine 5'-phosphate (PNP) and inorganic phosphate. This Salmonella typhi protein is Pyridoxine 5'-phosphate synthase.